The chain runs to 94 residues: DNA-directed RNA polymerase subunit Rpo11 (94 aa).

Belongs to the archaeal Rpo11/eukaryotic RPB11/RPC19 RNA polymerase subunit family. As to quaternary structure, part of the RNA polymerase complex.

The protein localises to the cytoplasm. The catalysed reaction is RNA(n) + a ribonucleoside 5'-triphosphate = RNA(n+1) + diphosphate. Functionally, DNA-dependent RNA polymerase (RNAP) catalyzes the transcription of DNA into RNA using the four ribonucleoside triphosphates as substrates. The sequence is that of DNA-directed RNA polymerase subunit Rpo11 from Halobacterium salinarum (strain ATCC 700922 / JCM 11081 / NRC-1) (Halobacterium halobium).